The chain runs to 146 residues: Large ribosomal subunit protein uL11 (146 aa).

It belongs to the universal ribosomal protein uL11 family. Part of the ribosomal stalk of the 50S ribosomal subunit. Interacts with L10 and the large rRNA to form the base of the stalk. L10 forms an elongated spine to which L12 dimers bind in a sequential fashion forming a multimeric L10(L12)X complex. One or more lysine residues are methylated.

In terms of biological role, forms part of the ribosomal stalk which helps the ribosome interact with GTP-bound translation factors. In Wolbachia pipientis wMel, this protein is Large ribosomal subunit protein uL11.